We begin with the raw amino-acid sequence, 309 residues long: Tagatose-6-phosphate kinase (309 aa).

Belongs to the carbohydrate kinase PfkB family. LacC subfamily.

It catalyses the reaction D-tagatofuranose 6-phosphate + ATP = D-tagatofuranose 1,6-bisphosphate + ADP + H(+). It participates in carbohydrate metabolism; D-tagatose 6-phosphate degradation; D-glyceraldehyde 3-phosphate and glycerone phosphate from D-tagatose 6-phosphate: step 1/2. The polypeptide is Tagatose-6-phosphate kinase (Streptococcus pneumoniae (strain Taiwan19F-14)).